Reading from the N-terminus, the 625-residue chain is tRNA uridine 5-carboxymethylaminomethyl modification enzyme MnmG (625 aa).

FAD is bound by residues 11–16 (GAGHAG), valine 123, and serine 178. 271–285 (GPRYCPSIETKIVTF) provides a ligand contact to NAD(+). Residue glutamine 368 participates in FAD binding.

It belongs to the MnmG family. In terms of assembly, homodimer. Heterotetramer of two MnmE and two MnmG subunits. Requires FAD as cofactor.

It localises to the cytoplasm. Functionally, NAD-binding protein involved in the addition of a carboxymethylaminomethyl (cmnm) group at the wobble position (U34) of certain tRNAs, forming tRNA-cmnm(5)s(2)U34. The sequence is that of tRNA uridine 5-carboxymethylaminomethyl modification enzyme MnmG from Bacteroides fragilis (strain ATCC 25285 / DSM 2151 / CCUG 4856 / JCM 11019 / LMG 10263 / NCTC 9343 / Onslow / VPI 2553 / EN-2).